The sequence spans 264 residues: Tritrans,polycis-undecaprenyl-diphosphate synthase (geranylgeranyl-diphosphate specific) (264 aa).

The active site involves aspartate 43. Aspartate 43 lines the Mg(2+) pocket. Substrate is bound by residues 44–47 (GNRR), tryptophan 48, histidine 60, and 88–90 (STE). Asparagine 91 (proton acceptor) is an active-site residue. Substrate-binding positions include phenylalanine 92, arginine 94, arginine 213, and 219–221 (RIS). Position 232 (glutamate 232) interacts with Mg(2+).

The protein belongs to the UPP synthase family. In terms of assembly, homodimer. Requires Mg(2+) as cofactor.

The enzyme catalyses geranylgeranyl diphosphate + 7 isopentenyl diphosphate = tri-trans,hepta-cis-undecaprenyl diphosphate + 7 diphosphate. Functionally, catalyzes the sequential condensation of isopentenyl diphosphate (IPP) with geranylgeranyl diphosphate (GGPP) to yield (2Z,6Z,10Z,14Z,18Z,22Z,26Z,30E,34E,38E)-undecaprenyl diphosphate (tritrans,heptacis-UPP). It is probably the precursor of glycosyl carrier lipids. This Thermococcus kodakarensis (strain ATCC BAA-918 / JCM 12380 / KOD1) (Pyrococcus kodakaraensis (strain KOD1)) protein is Tritrans,polycis-undecaprenyl-diphosphate synthase (geranylgeranyl-diphosphate specific).